Here is a 154-residue protein sequence, read N- to C-terminus: Ribosomal RNA large subunit methyltransferase H (154 aa).

Residue G102 coordinates S-adenosyl-L-methionine.

This sequence belongs to the RNA methyltransferase RlmH family. As to quaternary structure, homodimer.

It is found in the cytoplasm. The catalysed reaction is pseudouridine(1915) in 23S rRNA + S-adenosyl-L-methionine = N(3)-methylpseudouridine(1915) in 23S rRNA + S-adenosyl-L-homocysteine + H(+). Specifically methylates the pseudouridine at position 1915 (m3Psi1915) in 23S rRNA. In Phenylobacterium zucineum (strain HLK1), this protein is Ribosomal RNA large subunit methyltransferase H.